Here is a 546-residue protein sequence, read N- to C-terminus: Chaperonin GroEL 2 (546 aa).

Residues 30-33 (TLGP), lysine 51, 87-91 (DGTTT), glycine 415, and aspartate 496 contribute to the ATP site.

Belongs to the chaperonin (HSP60) family. In terms of assembly, forms a cylinder of 14 subunits composed of two heptameric rings stacked back-to-back. Interacts with the co-chaperonin GroES.

The protein localises to the cytoplasm. The enzyme catalyses ATP + H2O + a folded polypeptide = ADP + phosphate + an unfolded polypeptide.. Its function is as follows. Together with its co-chaperonin GroES, plays an essential role in assisting protein folding. The GroEL-GroES system forms a nano-cage that allows encapsulation of the non-native substrate proteins and provides a physical environment optimized to promote and accelerate protein folding. This is Chaperonin GroEL 2 from Bradyrhizobium sp. (strain ORS 278).